Consider the following 142-residue polypeptide: Putative pre-16S rRNA nuclease (142 aa).

Belongs to the YqgF nuclease family.

Its subcellular location is the cytoplasm. In terms of biological role, could be a nuclease involved in processing of the 5'-end of pre-16S rRNA. The chain is Putative pre-16S rRNA nuclease from Staphylococcus aureus (strain bovine RF122 / ET3-1).